Consider the following 632-residue polypeptide: Arginine--tRNA ligase (632 aa).

Residues 129 to 139 carry the 'HIGH' region motif; the sequence is ANPVHPLHVGS.

The protein belongs to the class-I aminoacyl-tRNA synthetase family.

The protein localises to the cytoplasm. It carries out the reaction tRNA(Arg) + L-arginine + ATP = L-arginyl-tRNA(Arg) + AMP + diphosphate. The protein is Arginine--tRNA ligase of Korarchaeum cryptofilum (strain OPF8).